Reading from the N-terminus, the 734-residue chain is ABC transporter D family member 1 (734 aa).

Transmembrane regions (helical) follow at residues 52–72 (IIKI…ILFG), 112–132 (FAIG…SIMA), 177–197 (FTTL…VVVY), and 204–224 (TTID…GYLI). Positions 63 to 351 (PLTLFLILFG…VEEEQAKIQF (289 aa)) constitute an ABC transmembrane type-1 domain. Residues 271–286 (HPEKRFDNNDYDHGYE) are compositionally biased toward basic and acidic residues. The tract at residues 271–296 (HPEKRFDNNDYDHGYESDDSDQSCDE) is disordered. The stretch at 332 to 359 (DSNDQKEELLVEEEQAKIQFEALLKNKK) forms a coiled coil. A helical membrane pass occupies residues 374–394 (LFTYLSPIANYFIIAIPVFFL). The ABC transporter domain maps to 492 to 729 (ITLDDVTYFT…NNNNTNKIAE (238 aa)). 525-532 (GPSGSGKS) is a binding site for ATP. The segment covering 712–725 (QSNNINNNNNNNTN) has biased composition (low complexity). Positions 712–734 (QSNNINNNNNNNTNKIAEDSVFD) are disordered.

Belongs to the ABC transporter superfamily. ABCD family. Peroxisomal fatty acyl CoA transporter (TC 3.A.1.203) subfamily.

Its subcellular location is the membrane. It catalyses the reaction (9Z)-octadecenoyl-CoA(in) = (9Z)-octadecenoyl-CoA(out). The sequence is that of ABC transporter D family member 1 (abcD1) from Dictyostelium discoideum (Social amoeba).